Reading from the N-terminus, the 199-residue chain is Probable GTP-binding protein EngB (199 aa).

Positions 28–199 constitute an EngB-type G domain; sequence DLPEIALAGR…DSWDAILEQV (172 aa). GTP contacts are provided by residues 36-43, 63-67, 81-84, 148-151, and 180-182; these read GRSNVGKS, GKTQL, DVPG, TKAD, and FSS. Residues serine 43 and threonine 65 each coordinate Mg(2+).

This sequence belongs to the TRAFAC class TrmE-Era-EngA-EngB-Septin-like GTPase superfamily. EngB GTPase family. Mg(2+) serves as cofactor.

Necessary for normal cell division and for the maintenance of normal septation. This Streptococcus pyogenes serotype M3 (strain SSI-1) protein is Probable GTP-binding protein EngB.